A 397-amino-acid polypeptide reads, in one-letter code: Protein Brevis radix-like 1 (397 aa).

Disordered regions lie at residues 14–37 and 105–148; these read GAPP…AGEC and RAGS…EDDE. Residues 124-148 are compositionally biased toward acidic residues; it reads AGDEEEEEEEEEEEGTTADGSEDDE. Positions 150–205 constitute a BRX 1 domain; sequence KEWVAQVEPGVLITFLSLPEGGNDLKRIRFSREIFNKWQAQRWWAENYEKVMELYN. Disordered stretches follow at residues 212 to 278 and 300 to 342; these read QTPL…QQHH and SISG…DQER. Basic and acidic residues predominate over residues 220-230; the sequence is KSEDESLKEDI. Over residues 309–320 the composition is skewed to low complexity; the sequence is SSMDASMRSSSS. In terms of domain architecture, BRX 2 spans 342–397; it reads REWVEEDEPGVYITIRALPGGIRELRRVRFSREKFSEMHARLWWEENRARIHDQYL.

The protein belongs to the BRX family.

The protein localises to the nucleus. The sequence is that of Protein Brevis radix-like 1 (BRXL1) from Oryza sativa subsp. japonica (Rice).